Reading from the N-terminus, the 231-residue chain is MPLGYWGVMGNCFRRLSLFGQPTQANYEMLCSSDDLESEELTYFLDMTYKDFGVYQNDIISHQKDTETMKTLLGLLPMYKKTKLRHTIMERCLSNCPNHVKDALCVELMKAEKILQTMDVVFMKTLIGEFSMCTDNLNQLLNKFATDQSTLSDVEKINSLIEIDGENSKRLLVELDPILHEETGLYQALPNVVTEAPSEKVKSIHVESEGESVWSSVTEGGIMKQEKGTGV.

Cys12 carries the S-palmitoyl cysteine; by host lipid modification.

It belongs to the herpesviridae UL51 family. Oligomerizes. Interacts with U75; this interaction mediates U75 incorporation to virions. In terms of processing, phosphorylated. Palmitoylation is necessary for Golgi localization.

It is found in the virion tegument. The protein localises to the host cytoplasm. The protein resides in the host Golgi apparatus. Functionally, plays several roles during the time course of infection, including egress of virus particles from the perinuclear space and secondary envelopment of cytoplasmic capsids that bud into specific trans-Golgi network (TGN)-derived membranes. This Human herpesvirus 6B (strain Z29) (HHV-6 variant B) protein is Tegument protein UL51 homolog (U44).